The sequence spans 1342 residues: MVYSYTEKKRIRKDFGKRPQVLDIPYLLSIQLDSFQKFIEQDPEGQYGLEAAFRSVFPIKSYSGNSELQYVSYRLGEPVFDVKECQIRGVTFSAPLRVKLRLVIYEREAPEGTVKDIKEQEVYMGEIPLMTDNGTFVINGTERVIVSQLHRSPGVFFDSDKGKTHSSGKVLYNARIIPYRGSWLDFEFDPKDNLFVRIDRRRKLPATIILRALGYSTEQILDLFFDKIVYEINGNKLQMDLVPERLRGETASFDIEANGKVYIEKGRRITARHIRQLEKDGIERIEVPVEYIAGKVLSKDYIDESTGELIGAANMELSLDLLAKLSQSGHKRIETLFTNDLDHGAYMSETVRVDPSNDRLSALVEIYRMMRPGEPPTREAAETLFENLFFSEDRYDLSAVGRMKFNRSLLRDEIEGSGILSKDDIIEVMKKLIDIRNGKGEVDDIDHLGNRRIRSVGEMAENQFRVGLVRVERAVKERLSLGDLDTLMPQDMINAKPISAAVKEFFGSSQLSQFMDQNNPLSEITHKRRISALGPGGLTRERAGFEVRDVHPTHYGRVCPIETPEGPNIGLINSLSVYAQTNEYGFLETPYRRVRDNVVTDEIHYLSAIEEGNFVIAQANTNLDEEGRFIDELVTCRNKGESSLFSRDQVEYMDVSTQQVVSVGASLIPFLEHDDANRALMGANMQRQAVPTLRADKPLVGTGMERAVAVDSGVTAVAKRGGTVQYVDASRIVIRVNDDEMYPGEAGIDIYNLTKYTRSNQNTCISQMPCVSLGEPVERGDVLADGPSTDLGELALGQNMRVAFMPWNGYNFEDSILVSERVVQEDRFTTIHIQELACVSRDTKLGPEEITADIPNVGEAALSKLDESGIVYIGAEVTGGDILVGKVTPKGETQLTPEEKLLRAIFGEKASDVKDSSLRVPNGVSGTIIDVQVFTRDGVEKDKRALEIEEMQLKQAKKDLTEELQILEAGLFARIHAVLVSGGVEADKLDKLPRERWLELGLTDEDKQNQLEQLAEQYDELKHEFEKKLEAKRRKITQGDDLAPGVLKIVKVYLAVKRQIQPGDKMAGRHGNKGVISKINPIEDMPYDENGTPVDIVLNPLGVPSRMNIGQILETHLGMAAKGIGEKINAMLKQHEEVTKLREFIQRAYDLGDDVRQKVDLSTFSDEEVMRLAENLKKGMPIATPVFDGAKEKEIKELLQMGGIPTSGQITLYDGRTGEKFERQVTVGYMYMLKLNHLVDDKMHARSTGSYSLVTQQPLGGKAQFGGQRFGEMEVWALEAYGAAYTLQEMLTVKSDDVNGRTKMYKNIVDGNHQMEPGMPESFNVLLKEIRSLGINIELEEE.

The protein belongs to the RNA polymerase beta chain family. The RNAP catalytic core consists of 2 alpha, 1 beta, 1 beta' and 1 omega subunit. When a sigma factor is associated with the core the holoenzyme is formed, which can initiate transcription.

The enzyme catalyses RNA(n) + a ribonucleoside 5'-triphosphate = RNA(n+1) + diphosphate. DNA-dependent RNA polymerase catalyzes the transcription of DNA into RNA using the four ribonucleoside triphosphates as substrates. The polypeptide is DNA-directed RNA polymerase subunit beta (Pectobacterium carotovorum subsp. carotovorum (strain PC1)).